A 343-amino-acid polypeptide reads, in one-letter code: Isopentenyl-diphosphate delta-isomerase (343 aa).

9–10 (RK) serves as a coordination point for substrate. FMN is bound by residues Ser-66, 67–69 (SMT), Ser-98, and Asn-126. Substrate is bound at residue 98-100 (SQR). Substrate is bound at residue Gln-161. Glu-162 provides a ligand contact to Mg(2+). FMN is bound by residues Lys-193, Thr-223, 273 to 275 (GIR), and 294 to 295 (AA).

This sequence belongs to the IPP isomerase type 2 family. As to quaternary structure, homooctamer. Dimer of tetramers. Requires FMN as cofactor. NADPH serves as cofactor. It depends on Mg(2+) as a cofactor.

Its subcellular location is the cytoplasm. It carries out the reaction isopentenyl diphosphate = dimethylallyl diphosphate. Functionally, involved in the biosynthesis of isoprenoids. Catalyzes the 1,3-allylic rearrangement of the homoallylic substrate isopentenyl (IPP) to its allylic isomer, dimethylallyl diphosphate (DMAPP). The sequence is that of Isopentenyl-diphosphate delta-isomerase from Hydrogenovibrio crunogenus (strain DSM 25203 / XCL-2) (Thiomicrospira crunogena).